A 353-amino-acid chain; its full sequence is Photosystem II D2 protein (353 aa).

Position 2 is an N-acetylthreonine (Thr-2). Residue Thr-2 is modified to Phosphothreonine. Residues 41-61 traverse the membrane as a helical segment; it reads CAYFALGGWFTGTTFVTSWYT. His-118 lines the chlorophyll a pocket. A helical membrane pass occupies residues 125-141; that stretch reads GFMLRQFELARSVQLRP. Pheophytin a-binding residues include Gln-130 and Asn-143. Residues 153-166 form a helical membrane-spanning segment; that stretch reads VFVSVSLIYPLGQA. His-198 is a binding site for chlorophyll a. Residues 208–228 form a helical membrane-spanning segment; it reads AALLCAIHGATVENTLFEDGD. Positions 215 and 262 each coordinate a plastoquinone. His-215 serves as a coordination point for Fe cation. Residue His-269 participates in Fe cation binding. The chain crosses the membrane as a helical span at residues 279–295; that stretch reads GLWMSAIGVVGLALNLR.

This sequence belongs to the reaction center PufL/M/PsbA/D family. PSII is composed of 1 copy each of membrane proteins PsbA, PsbB, PsbC, PsbD, PsbE, PsbF, PsbH, PsbI, PsbJ, PsbK, PsbL, PsbM, PsbT, PsbX, PsbY, PsbZ, Psb30/Ycf12, at least 3 peripheral proteins of the oxygen-evolving complex and a large number of cofactors. It forms dimeric complexes. The cofactor is The D1/D2 heterodimer binds P680, chlorophylls that are the primary electron donor of PSII, and subsequent electron acceptors. It shares a non-heme iron and each subunit binds pheophytin, quinone, additional chlorophylls, carotenoids and lipids. There is also a Cl(-1) ion associated with D1 and D2, which is required for oxygen evolution. The PSII complex binds additional chlorophylls, carotenoids and specific lipids..

It is found in the plastid. Its subcellular location is the chloroplast thylakoid membrane. It carries out the reaction 2 a plastoquinone + 4 hnu + 2 H2O = 2 a plastoquinol + O2. Photosystem II (PSII) is a light-driven water:plastoquinone oxidoreductase that uses light energy to abstract electrons from H(2)O, generating O(2) and a proton gradient subsequently used for ATP formation. It consists of a core antenna complex that captures photons, and an electron transfer chain that converts photonic excitation into a charge separation. The D1/D2 (PsbA/PsbD) reaction center heterodimer binds P680, the primary electron donor of PSII as well as several subsequent electron acceptors. D2 is needed for assembly of a stable PSII complex. This Angiopteris evecta (Mule's foot fern) protein is Photosystem II D2 protein.